The primary structure comprises 414 residues: 3-oxoacyl-[acyl-carrier-protein] synthase 2 (414 aa).

The Ketosynthase family 3 (KS3) domain maps to 3-411; it reads KRRVVITGLG…GTNGTLVLSR (409 aa). Residues Cys164, His304, and His341 each act as for beta-ketoacyl synthase activity in the active site.

Belongs to the thiolase-like superfamily. Beta-ketoacyl-ACP synthases family. As to quaternary structure, homodimer.

The enzyme catalyses a fatty acyl-[ACP] + malonyl-[ACP] + H(+) = a 3-oxoacyl-[ACP] + holo-[ACP] + CO2. It catalyses the reaction (9Z)-hexadecenoyl-[ACP] + malonyl-[ACP] + H(+) = 3-oxo-(11Z)-octadecenoyl-[ACP] + holo-[ACP] + CO2. Its pathway is lipid metabolism; fatty acid biosynthesis. In terms of biological role, involved in the type II fatty acid elongation cycle. Catalyzes the elongation of a wide range of acyl-ACP by the addition of two carbons from malonyl-ACP to an acyl acceptor. Can efficiently catalyze the conversion of palmitoleoyl-ACP (cis-hexadec-9-enoyl-ACP) to cis-vaccenoyl-ACP (cis-octadec-11-enoyl-ACP), an essential step in the thermal regulation of fatty acid composition. The protein is 3-oxoacyl-[acyl-carrier-protein] synthase 2 (fabF) of Coxiella burnetii (strain RSA 493 / Nine Mile phase I).